A 462-amino-acid polypeptide reads, in one-letter code: MTTAKSMEKIVALAKSRGFIFPGSEIYGGLANTWDYGPLGVELKNNVKKAWWKKFIQQSPYNVGLDSAILMNPTTWEASGHIGGFSDPLMDCKKCRARFRADKLIEDHFAKDGEDTIVDGWSNEQMASFIDEKAIVCPECDAKEFTDIRQFNLMFKTHQGVNEDTSTEIFLRPETAQGIFVNFKNVQRTARKKIPFGIGQIGKSFRNEITPGNYTFRTREFEQMELEFFCKPGDDLEWFDYWSNFCKKWLLDLSMKETSIRLRAHTEEELSHYSNATTDIEFKFPFGWGELWGIADRTDFDLKQHTEHSGVQLIYQDPVTNEKYVPYCIEPSLGADRVTLAFLVDAYEEEQIDEKDSRIVLKLHPALAPFKAAVLPLTKKLKEQSLELFEKLSDKFMIDYDDAGSIGKRYRRHDEIGTPYCITYDFDTLEDNCVTVRDRDTMEQQRVAIDELEVFLEEKIKF.

The substrate site is built by R100 and E174. ATP is bound by residues 206 to 208 (RNE), 216 to 221 (FRTREF), 290 to 291 (EL), and 334 to 337 (GADR). 221–225 (FEQME) is a substrate binding site. Residue 330 to 334 (EPSLG) coordinates substrate.

The protein belongs to the class-II aminoacyl-tRNA synthetase family. In terms of assembly, homodimer.

The protein localises to the cytoplasm. The enzyme catalyses tRNA(Gly) + glycine + ATP = glycyl-tRNA(Gly) + AMP + diphosphate. In terms of biological role, catalyzes the attachment of glycine to tRNA(Gly). This Alkaliphilus metalliredigens (strain QYMF) protein is Glycine--tRNA ligase.